The following is a 332-amino-acid chain: Catabolite control protein A (332 aa).

Residues 1-57 form the HTH lacI-type domain; the sequence is MNVTIYDVAREASVSMATVSRVVNGNPNVKPSTRKKVLETIERLGYRPNAVARGLAS. Positions 5-24 form a DNA-binding region, H-T-H motif; that stretch reads IYDVAREASVSMATVSRVVN.

Global transcriptional regulator of carbon catabolite repression (CCR) and carbon catabolite activation (CCA), which ensures optimal energy usage under diverse conditions. The chain is Catabolite control protein A (ccpA) from Priestia megaterium (Bacillus megaterium).